Consider the following 589-residue polypeptide: Mini-chromosome maintenance complex-binding protein (589 aa).

The segment at 163–211 (VDEEMTDSMDSSTLEAGRNGSPFKKMKVGEATSSASESQVPQTSGIPPA) is disordered. Residues 193–207 (ATSSASESQVPQTSG) show a composition bias toward polar residues.

The protein belongs to the MCMBP family. As to quaternary structure, interacts with the MCM complex.

It localises to the nucleus. Associated component of the MCM complex that acts as a regulator of DNA replication. Binds to the MCM complex during late S phase and may act by promoting the disassembly of the MCM complex from chromatin. Required for sister chromatid cohesion. The chain is Mini-chromosome maintenance complex-binding protein (ETG1) from Arabidopsis thaliana (Mouse-ear cress).